Reading from the N-terminus, the 319-residue chain is MNFNINILGTGGTRPLHNRYLTSVLIEYHGESILFDCGEATQMSLRKQKISWQKIKMICITHLHADHITGLLGIVMLMAQSGDTRKEPLTIIGPIGIKKYLETNIELLRVHKNYQIIYKEIIINKTEPVLYEDKRKRIEYIKLKHSIDCIGYLFIEKDKPGKFDIQKAESLNIPKGPIRKKLQEGYEVMLNGRKIVPSEILGETKKGLKFAYITDTAYFEELSTYIQNFNLVIIESTFKDDLKEEAKKKLHLTAKLAAQITKKAKVYQTGLIHFSERYTLNKDLYELLNEAQQEYPNGNIFLAKDGMKLKANKDKFIIK.

Zn(2+) contacts are provided by His-62, His-64, Asp-66, His-67, His-145, Asp-215, and His-273. Asp-66 (proton acceptor) is an active-site residue.

It belongs to the RNase Z family. Homodimer. The cofactor is Zn(2+).

It catalyses the reaction Endonucleolytic cleavage of RNA, removing extra 3' nucleotides from tRNA precursor, generating 3' termini of tRNAs. A 3'-hydroxy group is left at the tRNA terminus and a 5'-phosphoryl group is left at the trailer molecule.. In terms of biological role, zinc phosphodiesterase, which displays some tRNA 3'-processing endonuclease activity. Probably involved in tRNA maturation, by removing a 3'-trailer from precursor tRNA. This chain is Ribonuclease Z, found in Borrelia duttonii (strain Ly).